A 523-amino-acid chain; its full sequence is 2-isopropylmalate synthase (523 aa).

Positions 5-267 (VIIFDTTLRD…HTNINHHEIW (263 aa)) constitute a Pyruvate carboxyltransferase domain. Mn(2+) contacts are provided by aspartate 14, histidine 202, histidine 204, and asparagine 238. Residues 392-523 (RLDYFSVQSG…QNKENNKETV (132 aa)) are regulatory domain.

It belongs to the alpha-IPM synthase/homocitrate synthase family. LeuA type 1 subfamily. As to quaternary structure, homodimer. Mn(2+) serves as cofactor.

It is found in the cytoplasm. The enzyme catalyses 3-methyl-2-oxobutanoate + acetyl-CoA + H2O = (2S)-2-isopropylmalate + CoA + H(+). It participates in amino-acid biosynthesis; L-leucine biosynthesis; L-leucine from 3-methyl-2-oxobutanoate: step 1/4. Functionally, catalyzes the condensation of the acetyl group of acetyl-CoA with 3-methyl-2-oxobutanoate (2-ketoisovalerate) to form 3-carboxy-3-hydroxy-4-methylpentanoate (2-isopropylmalate). This Salmonella newport (strain SL254) protein is 2-isopropylmalate synthase.